Consider the following 84-residue polypeptide: Small ribosomal subunit protein eS27 (84 aa).

A compositionally biased stretch (basic and acidic residues) spans M1 to K16. A disordered region spans residues M1–R23. A Phosphoserine modification is found at S11. The C4-type zinc-finger motif lies at P38–S60.

This sequence belongs to the eukaryotic ribosomal protein eS27 family. As to quaternary structure, component of the small ribosomal subunit. Part of the small subunit (SSU) processome, composed of more than 70 proteins and the RNA chaperone small nucleolar RNA (snoRNA) U3. The cofactor is Zn(2+).

The protein resides in the cytoplasm. The protein localises to the nucleus. Its subcellular location is the nucleolus. Component of the small ribosomal subunit. The ribosome is a large ribonucleoprotein complex responsible for the synthesis of proteins in the cell. Required for proper rRNA processing and maturation of 18S rRNAs. Part of the small subunit (SSU) processome, first precursor of the small eukaryotic ribosomal subunit. During the assembly of the SSU processome in the nucleolus, many ribosome biogenesis factors, an RNA chaperone and ribosomal proteins associate with the nascent pre-rRNA and work in concert to generate RNA folding, modifications, rearrangements and cleavage as well as targeted degradation of pre-ribosomal RNA by the RNA exosome. This chain is Small ribosomal subunit protein eS27, found in Mus musculus (Mouse).